The chain runs to 148 residues: 3-hydroxyacyl-[acyl-carrier-protein] dehydratase FabZ (148 aa).

Residue histidine 50 is part of the active site.

It belongs to the thioester dehydratase family. FabZ subfamily.

The protein localises to the cytoplasm. It catalyses the reaction a (3R)-hydroxyacyl-[ACP] = a (2E)-enoyl-[ACP] + H2O. Functionally, involved in unsaturated fatty acids biosynthesis. Catalyzes the dehydration of short chain beta-hydroxyacyl-ACPs and long chain saturated and unsaturated beta-hydroxyacyl-ACPs. The chain is 3-hydroxyacyl-[acyl-carrier-protein] dehydratase FabZ from Levilactobacillus brevis (strain ATCC 367 / BCRC 12310 / CIP 105137 / JCM 1170 / LMG 11437 / NCIMB 947 / NCTC 947) (Lactobacillus brevis).